Reading from the N-terminus, the 377-residue chain is Phosphatidylserine decarboxylase proenzyme, mitochondrial (377 aa).

Residues 1 to 34 constitute a mitochondrion transit peptide; sequence MMPLFNVLRSARMLPAVSKKVVSPPMMLRSVREL. Topologically, residues 35 to 61 are mitochondrial matrix; that stretch reads TNQSKNVYATKEVIIGASQKKKRSWVK. Residues 62–80 form a helical membrane-spanning segment; that stretch reads WLSVSTLIIGGASYVGYLF. Topologically, residues 81–377 are mitochondrial intermembrane; the sequence is TPDWREIVDS…YGQSLVADGV (297 aa). Active-site charge relay system; for autoendoproteolytic cleavage activity residues include aspartate 181, histidine 238, and serine 344. Catalysis depends on serine 344, which acts as the Schiff-base intermediate with substrate; via pyruvic acid; for decarboxylase activity. Pyruvic acid (Ser); by autocatalysis is present on serine 344.

This sequence belongs to the phosphatidylserine decarboxylase family. PSD-B subfamily. Eukaryotic type I sub-subfamily. As to quaternary structure, heterodimer of a large membrane-associated beta subunit and a small pyruvoyl-containing alpha subunit. Pyruvate is required as a cofactor. In terms of processing, is synthesized initially as an inactive proenzyme. Formation of the active enzyme involves a self-maturation process in which the active site pyruvoyl group is generated from an internal serine residue via an autocatalytic post-translational modification. Two non-identical subunits are generated from the proenzyme in this reaction, and the pyruvate is formed at the N-terminus of the alpha chain, which is derived from the carboxyl end of the proenzyme. The autoendoproteolytic cleavage occurs by a canonical serine protease mechanism, in which the side chain hydroxyl group of the serine supplies its oxygen atom to form the C-terminus of the beta chain, while the remainder of the serine residue undergoes an oxidative deamination to produce ammonia and the pyruvoyl prosthetic group on the alpha chain. During this reaction, the Ser that is part of the protease active site of the proenzyme becomes the pyruvoyl prosthetic group, which constitutes an essential element of the active site of the mature decarboxylase.

Its subcellular location is the mitochondrion inner membrane. It carries out the reaction a 1,2-diacyl-sn-glycero-3-phospho-L-serine + H(+) = a 1,2-diacyl-sn-glycero-3-phosphoethanolamine + CO2. It participates in phospholipid metabolism; phosphatidylethanolamine biosynthesis; phosphatidylethanolamine from CDP-diacylglycerol: step 2/2. Functionally, catalyzes the formation of phosphatidylethanolamine (PtdEtn) from phosphatidylserine (PtdSer). Plays a central role in phospholipid metabolism and in the interorganelle trafficking of phosphatidylserine. In Caenorhabditis elegans, this protein is Phosphatidylserine decarboxylase proenzyme, mitochondrial.